Here is a 429-residue protein sequence, read N- to C-terminus: Gamma-glutamyl phosphate reductase (429 aa).

This sequence belongs to the gamma-glutamyl phosphate reductase family.

The protein resides in the cytoplasm. The catalysed reaction is L-glutamate 5-semialdehyde + phosphate + NADP(+) = L-glutamyl 5-phosphate + NADPH + H(+). The protein operates within amino-acid biosynthesis; L-proline biosynthesis; L-glutamate 5-semialdehyde from L-glutamate: step 2/2. Its function is as follows. Catalyzes the NADPH-dependent reduction of L-glutamate 5-phosphate into L-glutamate 5-semialdehyde and phosphate. The product spontaneously undergoes cyclization to form 1-pyrroline-5-carboxylate. This is Gamma-glutamyl phosphate reductase from Rhizorhabdus wittichii (strain DSM 6014 / CCUG 31198 / JCM 15750 / NBRC 105917 / EY 4224 / RW1) (Sphingomonas wittichii).